We begin with the raw amino-acid sequence, 449 residues long: Methionine aminopeptidase 2 (449 aa).

Residues M1–P91 are disordered. Positions E34–Q50 are enriched in acidic residues. The segment covering K61 to A75 has biased composition (basic residues). H199 provides a ligand contact to substrate. Residues D219, D230, and H299 each coordinate a divalent metal cation. Residue H307 participates in substrate binding. E335 and E430 together coordinate a divalent metal cation.

Belongs to the peptidase M24A family. Methionine aminopeptidase eukaryotic type 2 subfamily. It depends on Co(2+) as a cofactor. Zn(2+) is required as a cofactor. The cofactor is Mn(2+). Fe(2+) serves as cofactor.

The protein resides in the cytoplasm. The catalysed reaction is Release of N-terminal amino acids, preferentially methionine, from peptides and arylamides.. Cotranslationally removes the N-terminal methionine from nascent proteins. The N-terminal methionine is often cleaved when the second residue in the primary sequence is small and uncharged (Met-Ala-, Cys, Gly, Pro, Ser, Thr, or Val). The protein is Methionine aminopeptidase 2 of Trichophyton verrucosum (strain HKI 0517).